A 119-amino-acid chain; its full sequence is Large ribosomal subunit protein uL24 (119 aa).

The protein belongs to the universal ribosomal protein uL24 family. Part of the 50S ribosomal subunit.

Its function is as follows. One of two assembly initiator proteins, it binds directly to the 5'-end of the 23S rRNA, where it nucleates assembly of the 50S subunit. Located at the polypeptide exit tunnel on the outside of the subunit. This is Large ribosomal subunit protein uL24 from Methanococcus vannielii.